A 248-amino-acid chain; its full sequence is Granulin (248 aa).

This sequence belongs to the polyhedrin family.

In terms of biological role, component of the virus occlusion bodies, which are large proteinaceous structures, that protect the virus from the outside environment for extended periods until they are ingested by insect larvae. The sequence is that of Granulin from Choristoneura fumiferana (Spruce budworm moth).